Reading from the N-terminus, the 437-residue chain is Minor capsid protein p49 (437 aa).

Belongs to the asfivirus p49 structural protein family.

The protein localises to the virion. In terms of biological role, together with the penton and the other minor capsid proteins (M1249L, p17), forms a complicated network immediately below the outer capsid shell, stabilizing the whole capsid. Plays an essential role in the formation of infectious virus particles. Especially required for the formation of the capsid vertices. During virion assembly, associates with the membrane and probably mediates the docking of the penton complex to the inner membrane, where it recruits the capsomers to form the penton core. The sequence is that of Minor capsid protein p49 from Ornithodoros (relapsing fever ticks).